A 492-amino-acid chain; its full sequence is E3 ubiquitin-protein ligase TRIM35 (492 aa).

Met1 carries the post-translational modification N-acetylmethionine. A phosphoserine mark is found at Ser4 and Ser8. An RING-type zinc finger spans residues 21–61; it reads CAVCYDPFRDAVTLRCGHNFCRGCVSRCWEVQVSPTCPVCK. The segment at 96–137 adopts a B box-type zinc-finger fold; sequence RFSRVCRLHRGQLSLFCLEDKELLCCSCQADPRHQGHRVQPV. Residues Cys101, His104, Cys123, and His129 each coordinate Zn(2+). Residues 210–249 are a coiled coil; the sequence is AEETRQKQLLADEKMKQLTEETEVLAHEIERLQMEMKEDD. The 204-residue stretch at 283 to 486 folds into the B30.2/SPRY domain; the sequence is YLGSLQYRVW…LRICPLHISV (204 aa).

As to quaternary structure, interacts with PKM isoform M2, but not isoform M1; this interaction may compete with that between PKM and FGFR1, and hence reduces FGFR1-dependent tyrosine phosphorylation of PKM. Interacts with IRF7; this interaction promotes IRF7 proteasomal degradation. Interacts with TRAF3; this interaction promotes TRAF3 activation.

The protein localises to the cytoplasm. It localises to the nucleus. It catalyses the reaction S-ubiquitinyl-[E2 ubiquitin-conjugating enzyme]-L-cysteine + [acceptor protein]-L-lysine = [E2 ubiquitin-conjugating enzyme]-L-cysteine + N(6)-ubiquitinyl-[acceptor protein]-L-lysine.. Its pathway is protein modification; protein ubiquitination. In terms of biological role, E3 ubiquitin-protein ligase that participates in multiple biological processes including cell death, glucose metabolism, and in particular, the innate immune response. Mediates 'Lys-63'-linked polyubiquitination of TRAF3 thereby promoting type I interferon production via RIG-I signaling pathway. Can also catalyze 'Lys-48'-linked polyubiquitination and proteasomal degradation of viral proteins such as influenza virus PB2. Acts as a negative feedback regulator of TLR7- and TLR9-triggered signaling. Mechanistically, promotes the 'Lys-48'-linked ubiquitination of IRF7 and induces its degradation via a proteasome-dependent pathway. Reduces FGFR1-dependent tyrosine phosphorylation of PKM, inhibiting PKM-dependent lactate production, glucose metabolism, and cell growth. This chain is E3 ubiquitin-protein ligase TRIM35 (TRIM35), found in Pongo abelii (Sumatran orangutan).